The following is a 303-amino-acid chain: Glycine--tRNA ligase alpha subunit (303 aa).

Belongs to the class-II aminoacyl-tRNA synthetase family. In terms of assembly, tetramer of two alpha and two beta subunits.

It is found in the cytoplasm. It carries out the reaction tRNA(Gly) + glycine + ATP = glycyl-tRNA(Gly) + AMP + diphosphate. This is Glycine--tRNA ligase alpha subunit from Bordetella pertussis (strain Tohama I / ATCC BAA-589 / NCTC 13251).